Reading from the N-terminus, the 346-residue chain is Protein PXR1 (346 aa).

2 disordered regions span residues 1-27 (MGLA…NTEN) and 146-315 (EDAE…QVSV). A compositionally biased stretch (polar residues) spans 15–27 (DPNNTRWSRNTEN). A G-patch domain is found at 25–79 (TENFGHRMLRSQGWEPGQYLGPQDASHAVYHTAASASHIKVALKEDNLGLGAKMN). Residues 215–230 (SKSKKSHKSKKEKKRR) show a composition bias toward basic residues. Positions 235–245 (ASDEQESEDEE) are enriched in acidic residues. A compositionally biased stretch (basic residues) spans 249 to 274 (KRRKKEKKERKERRREKREKKLKKKQ). Residues 293-314 (GVDTGASTPVASGTSTPVSQVS) are compositionally biased toward polar residues.

The protein belongs to the PINX1 family.

Its subcellular location is the nucleus. The protein resides in the nucleolus. Its function is as follows. Involved in rRNA-processing at A0, A1 and A2 sites and negatively regulates telomerase. This is Protein PXR1 (PXR1) from Pyricularia oryzae (strain 70-15 / ATCC MYA-4617 / FGSC 8958) (Rice blast fungus).